The chain runs to 522 residues: Protein DETOXIFICATION 31 (522 aa).

12 consecutive transmembrane segments (helical) span residues 89–109 (GAVT…AVSI), 113–133 (VIAG…ETLC), 154–174 (VILS…APIL), 183–203 (ISAM…AYAI), 217–237 (IMVM…FTWL), 249–269 (LALV…VYIF), 299–319 (AAML…AGYL), 324–344 (VSVA…MVAF), 371–391 (VVAV…LLFF), 415–435 (MLAF…VAVG), 441–461 (VVAY…GLLL), and 471–491 (GIWW…TWMI).

It belongs to the multi antimicrobial extrusion (MATE) (TC 2.A.66.1) family.

The protein resides in the membrane. Functionally, positively mediates root hair elongation. The polypeptide is Protein DETOXIFICATION 31 (Arabidopsis thaliana (Mouse-ear cress)).